Here is a 240-residue protein sequence, read N- to C-terminus: 31 kDa outer-membrane immunogenic protein (240 aa).

An N-terminal signal peptide occupies residues 1–19 (MKSVILASIAAMFATSAMA). The interval 48 to 83 (NAGYAGGKFKHPFSSFDKEDNEQVSGSLDVTAGGFV) is epitope recognized by the monoclonal antibody A59/10F09/G10.

It belongs to the Omp25/RopB family. In terms of assembly, oligomeric.

Its subcellular location is the cell outer membrane. In terms of biological role, major outer membrane protein associated with peptidoglycans. May function as a porin. The polypeptide is 31 kDa outer-membrane immunogenic protein (omp31) (Brucella melitensis biotype 1 (strain ATCC 23456 / CCUG 17765 / NCTC 10094 / 16M)).